The chain runs to 425 residues: Lipoyl synthase, mitochondrial (425 aa).

The N-terminal 33 residues, 1–33, are a transit peptide targeting the mitochondrion; the sequence is MAASSTRLRCLYASSSTWKTSPSQSLISLSRRY. The tract at residues 17 to 55 is disordered; the sequence is TWKTSPSQSLISLSRRYATTSSAPPTPSDESSSTLPKRR. A compositionally biased stretch (polar residues) spans 33–51; it reads YATTSSAPPTPSDESSSTL. 7 residues coordinate [4Fe-4S] cluster: C142, C147, C153, C173, C177, C180, and S388. The Radical SAM core domain occupies 156 to 377; the sequence is GSDKSAATAT…RQRALEMGFL (222 aa).

The protein belongs to the radical SAM superfamily. Lipoyl synthase family. The cofactor is [4Fe-4S] cluster.

The protein resides in the mitochondrion. The enzyme catalyses [[Fe-S] cluster scaffold protein carrying a second [4Fe-4S](2+) cluster] + N(6)-octanoyl-L-lysyl-[protein] + 2 oxidized [2Fe-2S]-[ferredoxin] + 2 S-adenosyl-L-methionine + 4 H(+) = [[Fe-S] cluster scaffold protein] + N(6)-[(R)-dihydrolipoyl]-L-lysyl-[protein] + 4 Fe(3+) + 2 hydrogen sulfide + 2 5'-deoxyadenosine + 2 L-methionine + 2 reduced [2Fe-2S]-[ferredoxin]. Its pathway is protein modification; protein lipoylation via endogenous pathway; protein N(6)-(lipoyl)lysine from octanoyl-[acyl-carrier-protein]: step 2/2. Catalyzes the radical-mediated insertion of two sulfur atoms into the C-6 and C-8 positions of the octanoyl moiety bound to the lipoyl domains of lipoate-dependent enzymes, thereby converting the octanoylated domains into lipoylated derivatives. This Talaromyces marneffei (strain ATCC 18224 / CBS 334.59 / QM 7333) (Penicillium marneffei) protein is Lipoyl synthase, mitochondrial.